The following is a 1015-amino-acid chain: Probable beta-galactosidase B (1015 aa).

Positions 1 to 20 are cleaved as a signal peptide; sequence MAHIYRLLLLLLSNLWFSTA. Asparagine 23 carries an N-linked (GlcNAc...) asparagine glycan. Tyrosine 90 contributes to the substrate binding site. N-linked (GlcNAc...) asparagine glycans are attached at residues asparagine 99 and asparagine 100. Residues asparagine 135, alanine 136, and glutamate 137 each coordinate substrate. N-linked (GlcNAc...) asparagine glycosylation occurs at asparagine 172. Asparagine 195 contacts substrate. Glutamate 196 acts as the Proton donor in catalysis. Asparagine 211 carries an N-linked (GlcNAc...) asparagine glycan. Tyrosine 265 contacts substrate. Cysteine 271 and cysteine 324 are disulfide-bonded. Glutamate 308 acts as the Nucleophile in catalysis. A substrate-binding site is contributed by tyrosine 373. N-linked (GlcNAc...) asparagine glycans are attached at residues asparagine 411, asparagine 456, asparagine 554, asparagine 679, asparagine 735, asparagine 775, and asparagine 821.

Belongs to the glycosyl hydrolase 35 family.

The protein localises to the secreted. The enzyme catalyses Hydrolysis of terminal non-reducing beta-D-galactose residues in beta-D-galactosides.. Cleaves beta-linked terminal galactosyl residues from gangliosides, glycoproteins, and glycosaminoglycans. The chain is Probable beta-galactosidase B (lacB) from Aspergillus fumigatus (strain CBS 144.89 / FGSC A1163 / CEA10) (Neosartorya fumigata).